A 453-amino-acid chain; its full sequence is tRNA modification GTPase MnmE (453 aa).

(6S)-5-formyl-5,6,7,8-tetrahydrofolate is bound by residues Arg-22, Glu-79, and Lys-119. Residues 215 to 376 (GMKVVIAGRP…LREHLKACMG (162 aa)) enclose the TrmE-type G domain. Asn-225 contacts K(+). Residues 225-230 (NAGKSS), 244-250 (TEIAGTT), 269-272 (DTAG), and 334-337 (NKAD) contribute to the GTP site. Ser-229 lines the Mg(2+) pocket. Residues Thr-244, Ile-246, and Thr-249 each coordinate K(+). Thr-250 serves as a coordination point for Mg(2+). Lys-453 serves as a coordination point for (6S)-5-formyl-5,6,7,8-tetrahydrofolate.

It belongs to the TRAFAC class TrmE-Era-EngA-EngB-Septin-like GTPase superfamily. TrmE GTPase family. Homodimer. Heterotetramer of two MnmE and two MnmG subunits. The cofactor is K(+).

It localises to the cytoplasm. Functionally, exhibits a very high intrinsic GTPase hydrolysis rate. Involved in the addition of a carboxymethylaminomethyl (cmnm) group at the wobble position (U34) of certain tRNAs, forming tRNA-cmnm(5)s(2)U34. In Aeromonas hydrophila subsp. hydrophila (strain ATCC 7966 / DSM 30187 / BCRC 13018 / CCUG 14551 / JCM 1027 / KCTC 2358 / NCIMB 9240 / NCTC 8049), this protein is tRNA modification GTPase MnmE.